The chain runs to 483 residues: Probable serine incorporator (483 aa).

11 consecutive transmembrane segments (helical) span residues 43 to 63, 109 to 129, 146 to 166, 169 to 189, 218 to 238, 249 to 269, 274 to 294, 295 to 315, 338 to 358, 414 to 434, and 457 to 477; these read STRI…WIML, IMFS…GVSS, LILL…FFIG, WSWI…ILLV, ISAT…MFHF, FFIG…MLPS, LPSS…YLVW, SAVS…PLFL, AGTN…SVAY, YSWS…MMVL, and VVSS…PVCL.

This sequence belongs to the TDE1 family.

It is found in the endoplasmic reticulum membrane. In terms of biological role, enhances the incorporation of serine into phosphatidylserine and sphingolipids. The sequence is that of Probable serine incorporator (serinc) from Monosiga brevicollis (Choanoflagellate).